Consider the following 607-residue polypeptide: Sulfite reductase [NADPH] flavoprotein alpha-component (607 aa).

The 139-residue stretch at 66–204 folds into the Flavodoxin-like domain; it reads VTILYGSQTG…AAGQWHADVL (139 aa). FMN-binding positions include 72-77, 119-122, and 155-164; these read SQTGNG, STHG, and LGDSSYEFFC. The FAD-binding FR-type domain maps to 239-456; it reads QNPYRAEVLV…VEPNKHFRLP (218 aa). FAD contacts are provided by residues Thr327, Leu361, 395-398, 413-415, and 428-431; these read RLYS, TVA, and GGAS. NADP(+) is bound by residues 527-528, 533-537, and Asp569; these read SR and KIYVQ. Tyr607 is an FAD binding site.

The protein belongs to the NADPH-dependent sulphite reductase flavoprotein subunit CysJ family. In the N-terminal section; belongs to the flavodoxin family. It in the C-terminal section; belongs to the flavoprotein pyridine nucleotide cytochrome reductase family. As to quaternary structure, alpha(8)-beta(8). The alpha component is a flavoprotein, the beta component is a hemoprotein. It depends on FAD as a cofactor. FMN is required as a cofactor.

It carries out the reaction hydrogen sulfide + 3 NADP(+) + 3 H2O = sulfite + 3 NADPH + 4 H(+). The protein operates within sulfur metabolism; hydrogen sulfide biosynthesis; hydrogen sulfide from sulfite (NADPH route): step 1/1. In terms of biological role, component of the sulfite reductase complex that catalyzes the 6-electron reduction of sulfite to sulfide. This is one of several activities required for the biosynthesis of L-cysteine from sulfate. The flavoprotein component catalyzes the electron flow from NADPH -&gt; FAD -&gt; FMN to the hemoprotein component. The polypeptide is Sulfite reductase [NADPH] flavoprotein alpha-component (Shewanella oneidensis (strain ATCC 700550 / JCM 31522 / CIP 106686 / LMG 19005 / NCIMB 14063 / MR-1)).